We begin with the raw amino-acid sequence, 901 residues long: DNA mismatch repair protein MutS (901 aa).

Residues 1-12 (MKYSASTSTPKS) are compositionally biased toward polar residues. The segment at 1–25 (MKYSASTSTPKSAQPKEEELENSLP) is disordered. Residue 679–686 (GPNASGKS) participates in ATP binding.

It belongs to the DNA mismatch repair MutS family.

Its function is as follows. This protein is involved in the repair of mismatches in DNA. It is possible that it carries out the mismatch recognition step. This protein has a weak ATPase activity. The sequence is that of DNA mismatch repair protein MutS from Trichodesmium erythraeum (strain IMS101).